Reading from the N-terminus, the 218-residue chain is Epoxyqueuosine reductase QueH (218 aa).

Residues C22, C23, C101, and C104 each contribute to the [4Fe-4S] cluster site. An intrachain disulfide couples C184 to C186.

The protein belongs to the QueH family.

The enzyme catalyses epoxyqueuosine(34) in tRNA + AH2 = queuosine(34) in tRNA + A + H2O. It functions in the pathway tRNA modification; tRNA-queuosine biosynthesis. Its function is as follows. Catalyzes the conversion of epoxyqueuosine (oQ) to queuosine (Q), which is a hypermodified base found in the wobble positions of tRNA(Asp), tRNA(Asn), tRNA(His) and tRNA(Tyr). This chain is Epoxyqueuosine reductase QueH, found in Acinetobacter baylyi (strain ATCC 33305 / BD413 / ADP1).